A 540-amino-acid polypeptide reads, in one-letter code: Chaperonin GroEL (540 aa).

Residues 29–32, 86–90, glycine 413, 476–478, and aspartate 492 contribute to the ATP site; these read TLGP, DGTTT, and NAA.

This sequence belongs to the chaperonin (HSP60) family. In terms of assembly, forms a cylinder of 14 subunits composed of two heptameric rings stacked back-to-back. Interacts with the co-chaperonin GroES.

The protein localises to the cytoplasm. The catalysed reaction is ATP + H2O + a folded polypeptide = ADP + phosphate + an unfolded polypeptide.. Functionally, together with its co-chaperonin GroES, plays an essential role in assisting protein folding. The GroEL-GroES system forms a nano-cage that allows encapsulation of the non-native substrate proteins and provides a physical environment optimized to promote and accelerate protein folding. This Streptococcus gordonii (strain Challis / ATCC 35105 / BCRC 15272 / CH1 / DL1 / V288) protein is Chaperonin GroEL.